The following is a 227-amino-acid chain: Urease accessory protein UreF (227 aa).

The protein belongs to the UreF family. In terms of assembly, ureD, UreF and UreG form a complex that acts as a GTP-hydrolysis-dependent molecular chaperone, activating the urease apoprotein by helping to assemble the nickel containing metallocenter of UreC. The UreE protein probably delivers the nickel.

It is found in the cytoplasm. Its function is as follows. Required for maturation of urease via the functional incorporation of the urease nickel metallocenter. The chain is Urease accessory protein UreF from Blochmanniella floridana.